The chain runs to 258 residues: Aspartate/glutamate leucyltransferase (258 aa).

Belongs to the R-transferase family. Bpt subfamily.

It localises to the cytoplasm. It carries out the reaction N-terminal L-glutamyl-[protein] + L-leucyl-tRNA(Leu) = N-terminal L-leucyl-L-glutamyl-[protein] + tRNA(Leu) + H(+). It catalyses the reaction N-terminal L-aspartyl-[protein] + L-leucyl-tRNA(Leu) = N-terminal L-leucyl-L-aspartyl-[protein] + tRNA(Leu) + H(+). Functionally, functions in the N-end rule pathway of protein degradation where it conjugates Leu from its aminoacyl-tRNA to the N-termini of proteins containing an N-terminal aspartate or glutamate. The chain is Aspartate/glutamate leucyltransferase from Rhodopseudomonas palustris (strain BisB18).